The primary structure comprises 116 residues: Beta-2-microglobulin (116 aa).

The signal sequence occupies residues 1 to 19; that stretch reads MRALITFALLCLLYITVQG. Residues 24-111 enclose the Ig-like C1-type domain; it reads PKVHVYSHFP…RHMKETKKFS (88 aa). C44 and C99 are joined by a disulfide.

The protein belongs to the beta-2-microglobulin family. As to quaternary structure, heterodimer of an alpha chain and a beta chain. Beta-2-microglobulin is the beta-chain of major histocompatibility complex class I molecules.

It is found in the secreted. Component of the class I major histocompatibility complex (MHC). Involved in the presentation of peptide antigens to the immune system. This is Beta-2-microglobulin (b2m) from Danio rerio (Zebrafish).